A 180-amino-acid polypeptide reads, in one-letter code: MTLKNIIIGFFTQIRSIFMIGANIFSKPETKLYPEEKVYLAPRYRGRIILTRNIDGQERCVACNLCAVVCPVDCISLQKSEKTDGRWYPKFFRINFSRCIFCGLCEEACPTAAIQLMPDFELSDFKRQDLVYEKKDLLISGPGKYPNYDFYNFSGVTLKGKKTGDLEIQARPIDVKDLLP.

4Fe-4S ferredoxin-type domains follow at residues 50–80 and 90–119; these read LTRN…LQKS and KFFR…LMPD. [4Fe-4S] cluster is bound by residues cysteine 60, cysteine 63, cysteine 66, cysteine 70, cysteine 99, cysteine 102, cysteine 105, and cysteine 109.

Belongs to the complex I 23 kDa subunit family. As to quaternary structure, NDH-1 is composed of 13 different subunits. Subunits NuoA, H, J, K, L, M, N constitute the membrane sector of the complex. The cofactor is [4Fe-4S] cluster.

Its subcellular location is the cell membrane. It carries out the reaction a quinone + NADH + 5 H(+)(in) = a quinol + NAD(+) + 4 H(+)(out). Functionally, NDH-1 shuttles electrons from NADH, via FMN and iron-sulfur (Fe-S) centers, to quinones in the respiratory chain. The immediate electron acceptor for the enzyme in this species is believed to be ubiquinone. Couples the redox reaction to proton translocation (for every two electrons transferred, four hydrogen ions are translocated across the cytoplasmic membrane), and thus conserves the redox energy in a proton gradient. This chain is NADH-quinone oxidoreductase subunit I, found in Buchnera aphidicola subsp. Acyrthosiphon pisum (strain APS) (Acyrthosiphon pisum symbiotic bacterium).